The sequence spans 885 residues: Insulin receptor substrate 1-A (885 aa).

The IRS-type PTB domain occupies 1 to 56 (MNIRRCGHSENFFFIEVGRSAVTGAGEFWMQVDDSVVAQNMHETILEAMKALSDEF). The segment at 56-225 (FRPRSKSQSS…GGFISSDEYG (170 aa)) is disordered. Low complexity-rich tracts occupy residues 61–75 (KSQS…ISVP), 99–109 (SATATSPAGGA), 176–197 (SPSA…GSTS), and 205–217 (SSAS…SDGG). The residue at position 104 (Ser104) is a Phosphoserine. Tyr257 is modified (phosphotyrosine; by INSR). Positions 257–260 (YICM) match the YXXM motif 1 motif. Polar residues-rich tracts occupy residues 263-276 (SSSH…QRYQ) and 296-313 (SSGT…PSQS). 2 disordered regions span residues 263–282 (SSSH…RGEE) and 293–313 (RTHS…PSQS). 5 short sequence motifs (YXXM motif) span residues 318 to 321 (YTEM), 364 to 367 (YMPM), 381 to 384 (YMPM), 409 to 412 (YMMM), and 451 to 454 (YINM). Phosphotyrosine; by INSR is present on residues Tyr364 and Tyr381. Tyr409 bears the Phosphotyrosine mark. The disordered stretch occupies residues 501–581 (NLRISANSGH…LPPEPKSPGE (81 aa)). The span at 504–515 (ISANSGHNLYTE) shows a compositional bias: polar residues. Positions 516-526 (DSSSSSTSSDS) are enriched in low complexity. Phosphotyrosine; by INSR is present on residues Tyr582 and Tyr620. The tract at residues 582–584 (YVN) is GRB2-binding. Positions 620-623 (YMNM) match the YXXM motif 7 motif. Positions 637 to 660 (TSSYEPPNKPVNSVCPTETCSSSR) are enriched in polar residues. Residues 637 to 665 (TSSYEPPNKPVNSVCPTETCSSSRPPIRG) are disordered. Tyr672 carries the post-translational modification Phosphotyrosine; by INSR. 2 short sequence motifs (YXXM motif) span residues 672–675 (YMSM) and 706–709 (YAEM). The tract at residues 732-803 (ASRSSLLGQG…SGEDVKRHSS (72 aa)) is disordered. Composition is skewed to polar residues over residues 743–758 (GPSA…NRNP) and 777–792 (ETFS…TTGP). Residues Tyr834 and Tyr866 each carry the phosphotyrosine; by INSR modification.

As to quaternary structure, interacts with the NPXY motif of tyrosine-phosphorylated igf1r and insr via the PTB domain. Binds to phosphatidylinositol 3-kinase p85 subunit at a low level in vitro prior to phosphorylation. Binding is greatly enhanced following tyrosine phosphorylation by insr and probably occurs via the phosphorylated YXXM motifs. Post-translationally, phosphorylation of Tyr-582 is required for grb2-binding.

Functionally, may mediate the control of various cellular processes by insulin. When phosphorylated by the insulin receptor binds specifically to various cellular proteins containing SH2 domains such as phosphatidylinositol 3-kinase p85 subunit or grb2. Activates phosphatidylinositol 3-kinase when bound to the regulatory p85 subunit. The protein is Insulin receptor substrate 1-A (irs1-a) of Xenopus laevis (African clawed frog).